We begin with the raw amino-acid sequence, 414 residues long: Succinylornithine transaminase (414 aa).

K260 bears the N6-(pyridoxal phosphate)lysine mark.

It belongs to the class-III pyridoxal-phosphate-dependent aminotransferase family. AstC subfamily. Pyridoxal 5'-phosphate is required as a cofactor.

The catalysed reaction is N(2)-succinyl-L-ornithine + 2-oxoglutarate = N-succinyl-L-glutamate 5-semialdehyde + L-glutamate. The protein operates within amino-acid degradation; L-arginine degradation via AST pathway; L-glutamate and succinate from L-arginine: step 3/5. Catalyzes the transamination of N(2)-succinylornithine and alpha-ketoglutarate into N(2)-succinylglutamate semialdehyde and glutamate. Can also act as an acetylornithine aminotransferase. This is Succinylornithine transaminase from Yersinia pestis bv. Antiqua (strain Antiqua).